The primary structure comprises 496 residues: E3 ubiquitin-protein ligase CBL-C (496 aa).

The interval 7–144 is 4H; the sequence is PRGWQRGEPR…SALFPAGKYC (138 aa). Residues 7 to 320 enclose the Cbl-PTB domain; the sequence is PRGWQRGEPR…GKKHNPDLTE (314 aa). Residues 145-217 are EF-hand-like; it reads GHLYQLTKGS…FEFDVFTRLF (73 aa). The Ca(2+) site is built by Asp-198, Thr-200, Asn-202, and Glu-209. The interval 218–320 is SH2-like; it reads QPWPTLLRNW…GKKHNPDLTE (103 aa). Residue Arg-263 participates in 4-O-phospho-L-tyrosine binding. The linker stretch occupies residues 321-349; sequence LCRVEPYQRIQVSEEQLLLYQAMNSTFQL. Tyr-340 bears the Phosphotyrosine; by SRC mark. The segment at 350 to 389 adopts an RING-type zinc-finger fold; it reads CKICAERDKDVRIEPCGHLLCSCCLAAWQDSDSQTCPFCR. The segment at 350 to 494 is interaction with RET; sequence CKICAERDKD…RPRAREEATE (145 aa). A disordered region spans residues 432-453; that stretch reads PVIPSAPSLLPEDQFPQGPQDK.

In terms of assembly, interacts with Ubiquitin-conjugating enzyme E2 UBE2D2 and UBE2D3. Isoform 1 interacts with EGFR (tyrosine phosphorylated). Interacts with the SH3 domain proteins LYN and CRK. Interacts (via RING-type zinc finger) with TGFB1I1 (via LIM zinc-binding domain 2); the interaction is direct and enhances the E3 activity. Interacts directly with RET (inactive) and CD2AP; dissociates from RET upon RET activation by GDNF which also increases the interaction with CD2AP suggesting dissociation as CBLC:CD2AP complex. Interacts with SRC; the interaction is enhanced when SRC is phosphorylated at 'Tyr-419'. In terms of processing, phosphorylated on tyrosines by EGFR. Post-translationally, phosphorylated on multiple tyrosine residues by SRC. Isoform 1, but not isoform 2, is phosphorylated on tyrosines by EGFR. Autoubiquitinated, when phosphorylated at Tyr-340. As to expression, widely expressed in tissues, where the expression is restricted to epithelial cells (at protein level).

The enzyme catalyses S-ubiquitinyl-[E2 ubiquitin-conjugating enzyme]-L-cysteine + [acceptor protein]-L-lysine = [E2 ubiquitin-conjugating enzyme]-L-cysteine + N(6)-ubiquitinyl-[acceptor protein]-L-lysine.. Phosphorylation at Tyr-340 is necessary and sufficient for the activation of E3 activity. In terms of biological role, acts as an E3 ubiquitin-protein ligase, which accepts ubiquitin from specific E2 ubiquitin-conjugating enzymes, and then transfers it to substrates promoting their degradation by the proteasome. Functionally coupled with the E2 ubiquitin-protein ligases UB2D1, UB2D2 and UB2D3. Regulator of EGFR mediated signal transduction; upon EGF activation, ubiquitinates EGFR. Isoform 1, but not isoform 2, inhibits EGF stimulated MAPK1 activation. Promotes ubiquitination of SRC phosphorylated at 'Tyr-424', has the highest ubiquitin ligase activity among CBL family proteins. In collaboration with CD2AP may act as regulatory checkpoint for Ret signaling by modulating the rate of RET degradation after ligand activation; CD2AP converts it from an inhibitor to a promoter of RET degradation; the function limits the potency of GDNF on neuronal survival. In Mus musculus (Mouse), this protein is E3 ubiquitin-protein ligase CBL-C (Cblc).